The sequence spans 240 residues: Ribosomal RNA small subunit methyltransferase G (240 aa).

Residues Gly79, Phe84, 130-131 (AE), and Arg149 each bind S-adenosyl-L-methionine.

The protein belongs to the methyltransferase superfamily. RNA methyltransferase RsmG family.

It localises to the cytoplasm. Its function is as follows. Specifically methylates the N7 position of a guanine in 16S rRNA. This Lactobacillus acidophilus (strain ATCC 700396 / NCK56 / N2 / NCFM) protein is Ribosomal RNA small subunit methyltransferase G.